Consider the following 523-residue polypeptide: Maturase K (523 aa).

The protein belongs to the intron maturase 2 family. MatK subfamily.

It is found in the plastid. The protein resides in the chloroplast. Usually encoded in the trnK tRNA gene intron. Probably assists in splicing its own and other chloroplast group II introns. The sequence is that of Maturase K from Asphodeline lutea (King's spear).